The primary structure comprises 502 residues: Ubiquitin-associated protein 1 (502 aa).

The interval 1–95 (MASKKLGADF…AEAKVNSKSG (95 aa)) is interaction with ESCRT-I. A UMA domain is found at 17 to 63 (LDDVPFKTGDKFKTPAKVGLPIGFSLPDCLQVVREVQYDFSLEKKTI). Basic and acidic residues predominate over residues 86–100 (AEAKVNSKSGPEGDS). A disordered region spans residues 86 to 117 (AEAKVNSKSGPEGDSKMSFSKTHSTATMPPPI). Residues 102–112 (MSFSKTHSTAT) show a composition bias toward polar residues. Phosphoserine occurs at positions 146, 205, and 289. The tract at residues 260–290 (VSNIKSLSFPKLDSDDSNQKTAKLASTFHST) is interaction with PTPN23. UBA domains are found at residues 389-430 (SPSE…LFAH) and 451-498 (QCSE…LMAR).

In terms of assembly, component of an ESCRT-I complex (endosomal sorting complex required for transport I) which consists of TSG101, VPS28, VPS37A and UBAP1 in a 1:1:1:1 stoichiometry. Interacts with PTPN23. Interacts (via UBA domains) with ubiquitinated proteins. As to expression, ubiquitous. Highly expressed in heart, brain, placenta, lung, liver, skeletal muscle and pancreas.

The protein resides in the cytoplasm. It localises to the cytosol. The protein localises to the endosome. Its function is as follows. Component of the ESCRT-I complex, a regulator of vesicular trafficking process. Binds to ubiquitinated cargo proteins and is required for the sorting of endocytic ubiquitinated cargos into multivesicular bodies (MVBs). Plays a role in the proteasomal degradation of ubiquitinated cell-surface proteins, such as EGFR and BST2. This is Ubiquitin-associated protein 1 from Homo sapiens (Human).